The primary structure comprises 361 residues: Phosphoserine aminotransferase (361 aa).

Positions 9 and 42 each coordinate L-glutamate. Residues 76 to 77 (AR), Trp-102, Thr-153, Asp-173, and Gln-196 each bind pyridoxal 5'-phosphate. N6-(pyridoxal phosphate)lysine is present on Lys-197. 238–239 (NT) lines the pyridoxal 5'-phosphate pocket.

The protein belongs to the class-V pyridoxal-phosphate-dependent aminotransferase family. SerC subfamily. Homodimer. Pyridoxal 5'-phosphate serves as cofactor.

It localises to the cytoplasm. It carries out the reaction O-phospho-L-serine + 2-oxoglutarate = 3-phosphooxypyruvate + L-glutamate. The enzyme catalyses 4-(phosphooxy)-L-threonine + 2-oxoglutarate = (R)-3-hydroxy-2-oxo-4-phosphooxybutanoate + L-glutamate. The protein operates within amino-acid biosynthesis; L-serine biosynthesis; L-serine from 3-phospho-D-glycerate: step 2/3. It functions in the pathway cofactor biosynthesis; pyridoxine 5'-phosphate biosynthesis; pyridoxine 5'-phosphate from D-erythrose 4-phosphate: step 3/5. Its function is as follows. Catalyzes the reversible conversion of 3-phosphohydroxypyruvate to phosphoserine and of 3-hydroxy-2-oxo-4-phosphonooxybutanoate to phosphohydroxythreonine. The polypeptide is Phosphoserine aminotransferase (Erwinia tasmaniensis (strain DSM 17950 / CFBP 7177 / CIP 109463 / NCPPB 4357 / Et1/99)).